The primary structure comprises 100 residues: Small ribosomal subunit protein uS14c (100 aa).

Residues 1 to 31 (MARKSLIQREKKRQKLEQKYHSIRRSSKKEI) are disordered.

Belongs to the universal ribosomal protein uS14 family. In terms of assembly, part of the 30S ribosomal subunit.

It is found in the plastid. Its subcellular location is the chloroplast. Functionally, binds 16S rRNA, required for the assembly of 30S particles. The protein is Small ribosomal subunit protein uS14c of Nicotiana tomentosiformis (Tobacco).